A 204-amino-acid polypeptide reads, in one-letter code: MSRGALIVFEGLDKSGKTTQCMNIMESIPSNTIKYLNFPQRSTVTGKMIDDYLTRKKTYNDHIVNLLFCANRWEFASFIQEQLEQGITLIVDRYAFSGVAYAAAKGASMTLSKSYESGLPKPDLVIFLESGSKEINRNVGEEIYEDVEFQQKVLQEYKKMIEEGDIHWQIISSEFEEDVKKELIKNIVIEAIHTVTGPVGQLWM.

11 to 18 is an ATP binding site; the sequence is GLDKSGKT.

Belongs to the thymidylate kinase family.

It carries out the reaction dTMP + ATP = dTDP + ADP. Its pathway is pyrimidine metabolism; dTTP biosynthesis. This chain is Thymidylate kinase (TMK), found in Cowpox virus (strain GRI-90 / Grishak) (CPV).